Reading from the N-terminus, the 175-residue chain is NAD(P)H-quinone oxidoreductase subunit J (175 aa).

This sequence belongs to the complex I 30 kDa subunit family. In terms of assembly, NDH-1 can be composed of about 15 different subunits; different subcomplexes with different compositions have been identified which probably have different functions.

The protein resides in the cellular thylakoid membrane. The catalysed reaction is a plastoquinone + NADH + (n+1) H(+)(in) = a plastoquinol + NAD(+) + n H(+)(out). The enzyme catalyses a plastoquinone + NADPH + (n+1) H(+)(in) = a plastoquinol + NADP(+) + n H(+)(out). Its function is as follows. NDH-1 shuttles electrons from an unknown electron donor, via FMN and iron-sulfur (Fe-S) centers, to quinones in the respiratory and/or the photosynthetic chain. The immediate electron acceptor for the enzyme in this species is believed to be plastoquinone. Couples the redox reaction to proton translocation, and thus conserves the redox energy in a proton gradient. Cyanobacterial NDH-1 also plays a role in inorganic carbon-concentration. This chain is NAD(P)H-quinone oxidoreductase subunit J, found in Trichormus variabilis (strain ATCC 29413 / PCC 7937) (Anabaena variabilis).